The sequence spans 247 residues: MVLVPKYLNFESDLAESVTNSMDSSLPDETTSDSIILTTFNDFSNWARLSSLWPLLYGTSCCFIEFASLIGSRFDFDRYGLVPRSSPRQADLIITAGTVTMKMAPSLVRLYEQMPEPKYVIAMGACTITGGMFSTDSYSTVRGVDKLIPVDIYLPGCPPKPEAIIDAIIKLRKGVAREVHERKDKLRQTRRYFTLNHQLEIVPIIHTGKYDEHLFSKFSEISIEPKLNVSPQRIEKSKSSISSQISF.

The [4Fe-4S] cluster site is built by Cys61, Cys62, Cys126, and Cys157.

The protein belongs to the complex I 20 kDa subunit family. NDH is composed of at least 16 different subunits, 5 of which are encoded in the nucleus. [4Fe-4S] cluster serves as cofactor.

It localises to the plastid. The protein localises to the chloroplast thylakoid membrane. It catalyses the reaction a plastoquinone + NADH + (n+1) H(+)(in) = a plastoquinol + NAD(+) + n H(+)(out). The catalysed reaction is a plastoquinone + NADPH + (n+1) H(+)(in) = a plastoquinol + NADP(+) + n H(+)(out). Functionally, NDH shuttles electrons from NAD(P)H:plastoquinone, via FMN and iron-sulfur (Fe-S) centers, to quinones in the photosynthetic chain and possibly in a chloroplast respiratory chain. The immediate electron acceptor for the enzyme in this species is believed to be plastoquinone. Couples the redox reaction to proton translocation, and thus conserves the redox energy in a proton gradient. The chain is NAD(P)H-quinone oxidoreductase subunit K, chloroplastic from Anthoceros angustus (Hornwort).